A 269-amino-acid chain; its full sequence is Regulatory protein RecX (269 aa).

Belongs to the RecX family.

It localises to the cytoplasm. Functionally, modulates RecA activity. This is Regulatory protein RecX from Listeria monocytogenes serotype 4b (strain CLIP80459).